The sequence spans 172 residues: MAQLKRILGIDPGSRKTGFGIIESGRFHPNYVSSGVIRVEKLTGAQRLKTIFESVCQIIDQYQPHVMAIEKVFVYKNPSSAIKLGQARGVILCAAAIKEIPIMEYTPTQIKSTIVGQGHATKDQVQFMVQNLLKLTESPQEDAADALAGALCHDRYLTLGIDPEKISKGTKF.

Active-site residues include aspartate 11, glutamate 70, and aspartate 142. Aspartate 11, glutamate 70, and aspartate 142 together coordinate Mg(2+).

This sequence belongs to the RuvC family. In terms of assembly, homodimer which binds Holliday junction (HJ) DNA. The HJ becomes 2-fold symmetrical on binding to RuvC with unstacked arms; it has a different conformation from HJ DNA in complex with RuvA. In the full resolvosome a probable DNA-RuvA(4)-RuvB(12)-RuvC(2) complex forms which resolves the HJ. Requires Mg(2+) as cofactor.

The protein resides in the cytoplasm. It catalyses the reaction Endonucleolytic cleavage at a junction such as a reciprocal single-stranded crossover between two homologous DNA duplexes (Holliday junction).. Functionally, the RuvA-RuvB-RuvC complex processes Holliday junction (HJ) DNA during genetic recombination and DNA repair. Endonuclease that resolves HJ intermediates. Cleaves cruciform DNA by making single-stranded nicks across the HJ at symmetrical positions within the homologous arms, yielding a 5'-phosphate and a 3'-hydroxyl group; requires a central core of homology in the junction. The consensus cleavage sequence is 5'-(A/T)TT(C/G)-3'. Cleavage occurs on the 3'-side of the TT dinucleotide at the point of strand exchange. HJ branch migration catalyzed by RuvA-RuvB allows RuvC to scan DNA until it finds its consensus sequence, where it cleaves and resolves the cruciform DNA. In Hydrogenovibrio crunogenus (strain DSM 25203 / XCL-2) (Thiomicrospira crunogena), this protein is Crossover junction endodeoxyribonuclease RuvC.